The following is a 211-amino-acid chain: Protein-L-isoaspartate O-methyltransferase 1 (211 aa).

The active site involves serine 62.

It belongs to the methyltransferase superfamily. L-isoaspartyl/D-aspartyl protein methyltransferase family.

The protein localises to the cytoplasm. It catalyses the reaction [protein]-L-isoaspartate + S-adenosyl-L-methionine = [protein]-L-isoaspartate alpha-methyl ester + S-adenosyl-L-homocysteine. Its function is as follows. Catalyzes the methyl esterification of L-isoaspartyl residues in peptides and proteins that result from spontaneous decomposition of normal L-aspartyl and L-asparaginyl residues. It plays a role in the repair and/or degradation of damaged proteins. The protein is Protein-L-isoaspartate O-methyltransferase 1 of Shewanella sediminis (strain HAW-EB3).